A 143-amino-acid polypeptide reads, in one-letter code: UPF0260 protein plu2141 (143 aa).

Belongs to the UPF0260 family.

The polypeptide is UPF0260 protein plu2141 (Photorhabdus laumondii subsp. laumondii (strain DSM 15139 / CIP 105565 / TT01) (Photorhabdus luminescens subsp. laumondii)).